Reading from the N-terminus, the 127-residue chain is Trefoil factor 2 (127 aa).

An N-terminal signal peptide occupies residues 1-21; that stretch reads EPQRPAPGHPPPAGAVCLTGA. The residue at position 22 (Q22) is a Pyrrolidone carboxylic acid. P-type domains follow at residues 27-71 and 77-120; these read CRCS…FKPL and EECV…FFPM. 7 disulfide bridges follow: C27-C125, C29-C56, C40-C55, C50-C67, C79-C105, C89-C104, and C99-C116.

As to expression, found in pancreas.

Its subcellular location is the secreted. In terms of biological role, inhibits gastrointestinal motility and gastric acid secretion. Could function as a structural component of gastric mucus, possibly by stabilizing glycoproteins in the mucus gel through interactions with carbohydrate side chains. The protein is Trefoil factor 2 (TFF2) of Sus scrofa (Pig).